A 163-amino-acid chain; its full sequence is 3-hydroxyacyl-[acyl-carrier-protein] dehydratase FabZ (163 aa).

Residue His-64 is part of the active site.

This sequence belongs to the thioester dehydratase family. FabZ subfamily.

The protein localises to the cytoplasm. The catalysed reaction is a (3R)-hydroxyacyl-[ACP] = a (2E)-enoyl-[ACP] + H2O. Involved in unsaturated fatty acids biosynthesis. Catalyzes the dehydration of short chain beta-hydroxyacyl-ACPs and long chain saturated and unsaturated beta-hydroxyacyl-ACPs. The chain is 3-hydroxyacyl-[acyl-carrier-protein] dehydratase FabZ from Caulobacter sp. (strain K31).